The chain runs to 49 residues: Turripeptide OL47 (49 aa).

Residues 28–49 (RSDTEKKCTGGPDPCPPRQWPD) form a disordered region. Positions 40–49 (DPCPPRQWPD) are enriched in pro residues.

Post-translationally, contains 4 disulfide bonds. Expressed by the venom duct.

It is found in the secreted. Functionally, acts as a neurotoxin by inhibiting an ion channel. The sequence is that of Turripeptide OL47 from Iotyrris olangoensis (Sea snail).